Consider the following 86-residue polypeptide: Neurotoxin 3FTx-LT (86 aa).

An N-terminal signal peptide occupies residues methionine 1–threonine 21. Intrachain disulfides connect cysteine 24–cysteine 45, cysteine 27–cysteine 32, cysteine 38–cysteine 63, cysteine 67–cysteine 78, and cysteine 79–cysteine 84.

Expressed by the venom gland.

Its subcellular location is the secreted. In terms of biological role, binds with low affinity to muscular (alpha-1-beta-1-delta-epsilon/CHRNA1-CHRNB1-CHRND-CHRNE) and very low affinity to neuronal (alpha-7/CHRNA7) nicotinic acetylcholine receptor (nAChR). The sequence is that of Neurotoxin 3FTx-LT from Bungarus fasciatus (Banded krait).